A 335-amino-acid chain; its full sequence is Dye-decolorizing peroxidase (335 aa).

The active-site Proton acceptor is the Asp149. His222 contributes to the heme binding site. Residues 312–335 (LPQAATPTLAAGSLSIGSLKGSPR) are targeting peptide.

The protein belongs to the DyP-type peroxidase family. As to quaternary structure, homotetramer, presumably also in the encapsulin nanocompartment. Heme b is required as a cofactor.

Its subcellular location is the encapsulin nanocompartment. It catalyses the reaction 2 a phenolic donor + H2O2 = 2 a phenolic radical donor + 2 H2O. Functionally, cargo of a type 1 encapsulin nanocompartment in situ; this cargo protects against oxidative stress at low pH. When expressed in the cytoplasm (absence of the encapsulin shell gene) it is almost as protective as the intact nanocompartment; its encapsulation has a modest yet significant effect on protection against oxidative stress at low pH. A heme-dependent peroxidase, it probably does not have deferrochelatase activity. Converts guaiacol and H2O2 to tetraguaiacol, also acts on 2,2'-azino-bis(3-ethylbenzothiazoline-6-sulfonic acid) (ABTS). Retains peroxidase activity when encapsulated but has a reduced set of substrates; acts on ABTS but not guaiacol. The polypeptide is Dye-decolorizing peroxidase (Mycobacterium tuberculosis (strain ATCC 25618 / H37Rv)).